The sequence spans 1370 residues: DNA-directed RNA polymerase subunit beta (1370 aa).

It belongs to the RNA polymerase beta chain family. In terms of assembly, the RNAP catalytic core consists of 2 alpha, 1 beta, 1 beta' and 1 omega subunit. When a sigma factor is associated with the core the holoenzyme is formed, which can initiate transcription.

It carries out the reaction RNA(n) + a ribonucleoside 5'-triphosphate = RNA(n+1) + diphosphate. In terms of biological role, DNA-dependent RNA polymerase catalyzes the transcription of DNA into RNA using the four ribonucleoside triphosphates as substrates. In Geotalea daltonii (strain DSM 22248 / JCM 15807 / FRC-32) (Geobacter daltonii), this protein is DNA-directed RNA polymerase subunit beta.